A 299-amino-acid chain; its full sequence is MSLANLRRLEAEAIHVLREVVATFSNPVVLYSIGKDSSVLLHLAMKAFFPAKPPFPFLHVDTTWKFREMIAFRDRMARELGFNLLVHTNQDGVDQGIGPFTHGSNLHTHVMKTMALRQALETYGFDAALAGARRDEEKSRAKERMFSIRNAQHGWDPKRQRPEMWKTYNTRVGAGETMRVFPLSNWTEFDIWQYILQENIPIVPLYFAARRPVVRRDGMLIMVDDERMPIEPGEEVMDRMVRFRTLGCYPLTGAIDSEAATVPDILREMLTVRTSERLSRLIDTDEAGAMEKKKREGYF.

The protein belongs to the PAPS reductase family. CysD subfamily. In terms of assembly, sulfate-activating enzymes, NodP and NodQ, may be physically associated.

It catalyses the reaction sulfate + ATP + H(+) = adenosine 5'-phosphosulfate + diphosphate. In terms of biological role, proposed to provide activated sulfate for transfer to nod factor. The protein is Sulfate adenylyltransferase subunit 2 (nodP) of Rhizobium sp. (strain BR816).